The chain runs to 581 residues: Caprolactamase subunit beta (581 aa).

The Zn(2+) site is built by aspartate 41, histidine 99, aspartate 102, and histidine 124.

Belongs to the HyuB family. The caprolactamase is a heterotetramer composed of two alpha subunits (CapA) and two beta subunits (CapB). Zn(2+) serves as cofactor.

Activity is dependent on the presence of ATP and bicarbonate. The requirement for bicarbonate may be related to allosteric activation through conformational effects, but it is also conceivable that carboxyphosphate is formed and acts as a mediator in caprolactam activation, forming carboxy- or phospholactim. Functionally, component of a caprolactamase involved in the degradation of caprolactam, an industrial compound mainly used in the production of Nylon 6. Catalyzes the ATP-dependent hydrolysis of the caprolactam ring to form 6-aminocaproic acid (6-ACA). The beta subunit is responsible for hydrolytic lactam ring opening. The enzyme cannot use 5-oxoproline. The chain is Caprolactamase subunit beta from Pseudomonas jessenii.